Consider the following 539-residue polypeptide: Diacylglycerol O-acyltransferase 1 (539 aa).

A disordered region spans residues methionine 1–glycine 104. Polar residues predominate over residues threonine 33 to asparagine 52. A compositionally biased stretch (basic and acidic residues) spans glutamate 56–arginine 80. The next 7 helical transmembrane spans lie at histidine 143–isoleucine 163, tryptophan 187–glutamate 207, valine 219–isoleucine 239, serine 244–valine 264, tyrosine 294–tyrosine 314, valine 334–isoleucine 354, and valine 383–leucine 403. Residues phenylalanine 410–asparagine 416 carry the FYXDWWN motif motif. A run of 3 helical transmembrane segments spans residues glycine 451 to valine 471, cysteine 473 to isoleucine 493, and valine 506 to leucine 526. The active site involves histidine 465.

The protein belongs to the membrane-bound acyltransferase family. Sterol o-acyltransferase subfamily.

It localises to the endoplasmic reticulum membrane. It carries out the reaction an acyl-CoA + a 1,2-diacyl-sn-glycerol = a triacyl-sn-glycerol + CoA. Its pathway is glycerolipid metabolism; triacylglycerol biosynthesis. Functionally, major contributor to triacylglycerol (TAG) synthesis and oil accumulation in developing seeds. Catalyzes the acylation of the sn-3 hydroxy group of sn-1,2-diacylglycerol using acyl-CoA. Has a marked preference for oleoyl-CoA as substrate. This Corylus americana (American hazelnut) protein is Diacylglycerol O-acyltransferase 1.